A 1288-amino-acid chain; its full sequence is SH3 domain and tetratricopeptide repeat-containing protein 2 (1288 aa).

2 SH3 domains span residues 176 to 240 (EGHF…PLPL) and 268 to 331 (IGRG…PDSY). Residues 386–395 (NPPNDLSASQ) are compositionally biased toward polar residues. 2 disordered regions span residues 386–405 (NPPN…VRPG) and 410–444 (EHQA…LPEP). TPR repeat units follow at residues 528–561 (ARLC…LNGA), 757–790 (RALC…GQLL), 836–869 (GVIY…AQEV), 1001–1037 (GRLL…FIDL), 1084–1118 (LKLY…LARR), 1119–1152 (LKAV…ATLA), 1166–1199 (LVAF…CPPW), and 1210–1244 (AKVY…AVLL).

In terms of tissue distribution, strongly expressed in brain and spinal cord. Expressed at equal level in spinal cord and sciatic nerve. Weakly expressed in striated muscle.

This is SH3 domain and tetratricopeptide repeat-containing protein 2 (SH3TC2) from Homo sapiens (Human).